Consider the following 341-residue polypeptide: MTETDEGAPVNHSATMWAVVGVPPVCGGQPGDSGVVAGTSRALVDAAIIAPVTTLTRDEPAQYDRYEFEGPRRRARRERAERRAAQACAIAIEEARREAKHRIHRQMSSEANSPKPVARGVVRGLKTLFATVMFSIAGFGLGLALYVTPAMSVRNIVVTGIETVTREEVLDAAGVQLGTPLLQINTNQVADQVAAIRRVASARAQRQYPSALRITIVERVPVVVKDFPDGPHLFDCDGVDFATAPPPPALPYIDVGHPGPIDPATKAALVVLLALRPEVVSQVARIAAPSVSSITLILTDGRAVIWGSTDRAEEKAEKLAALLTQPGRTYDVSSPDLPTVK.

The Cytoplasmic portion of the chain corresponds to 1–126 (MTETDEGAPV…VARGVVRGLK (126 aa)). A helical transmembrane segment spans residues 127–147 (TLFATVMFSIAGFGLGLALYV). Over 148–341 (TPAMSVRNIV…VSSPDLPTVK (194 aa)) the chain is Extracellular. The POTRA domain occupies 151–219 (MSVRNIVVTG…SALRITIVER (69 aa)).

It belongs to the FtsQ/DivIB family. FtsQ subfamily.

Its subcellular location is the cell membrane. Its function is as follows. Essential cell division protein. In Mycobacterium leprae (strain Br4923), this protein is Cell division protein FtsQ.